The sequence spans 1433 residues: Bacillopeptidase F (1433 aa).

A signal peptide spans 1-30 (MRKKTKNRLISSVLSTVVISSLLFPGAAGA). A propeptide spanning residues 31–194 (SSKVTSPSVK…NMKKAQKAIK (164 aa)) is cleaved from the precursor. One can recognise an Inhibitor I9 domain in the interval 68–177 (TFLIKFKDLA…KVLPNEKRQL (110 aa)). Positions 200-512 (EWNVDQIDAP…HGLVNAFDAV (313 aa)) constitute a Peptidase S8 domain. Catalysis depends on charge relay system residues Asp-227, His-274, and Ser-452. A propeptide spanning residues 756 to 1433 (SAYKGQNIQV…NGKLNMNTEN (678 aa)) is cleaved from the precursor. Residues 800–830 (KLGVEKPSGKQKKKPVNPKKAKPSANTAVKH) are disordered. Over residues 808–821 (GKQKKKPVNPKKAK) the composition is skewed to basic residues.

It belongs to the peptidase S8 family.

The protein resides in the secreted. This Bacillus subtilis (strain 168) protein is Bacillopeptidase F (bpr).